We begin with the raw amino-acid sequence, 248 residues long: Floral homeotic protein AGAMOUS (248 aa).

The 55-residue stretch at 19-73 (RGKIEIKRIENTTNRQVTFCKRRNGLLKKAYELSVLCDAEVALIVFSSRGRLYEY) folds into the MADS-box domain. One can recognise a K-box domain in the interval 103–193 (AQYYQQEASK…RAKIAETERA (91 aa)). The segment at 196-219 (QQQQQQMNLMPGSSSYELVPPPHQ) is disordered. Residues 202 to 211 (MNLMPGSSSY) are compositionally biased toward polar residues.

The protein localises to the nucleus. Probable transcription factor involved in regulating genes that determines stamen and carpel development in wild-type flowers. The chain is Floral homeotic protein AGAMOUS (AG1) from Nicotiana tabacum (Common tobacco).